We begin with the raw amino-acid sequence, 335 residues long: Protein BRASSINAZOLE-RESISTANT 2 (335 aa).

A compositionally biased stretch (low complexity) spans methionine 1–alanine 19. Disordered regions lie at residues methionine 1 to arginine 40, threonine 85 to proline 122, and proline 164 to proline 190. A required for DNA-binding region spans residues arginine 22–arginine 103. Over residues glycine 99–aspartate 120 the composition is skewed to polar residues. Residue threonine 175 is modified to Phosphothreonine. The PEST-like stretch occupies residues histidine 231–histidine 251.

It belongs to the BZR/LAT61 family. As to quaternary structure, interacts with ASK7/BIN2 through its C-terminal domain and with the bHLH transcription factors BIM1, BIM2 and BIM3 through its C- and N-terminal domains. Interacts (via N-terminus) with REF6 and ELF6. Interacts with MYB30. Interacts with IWS1. Interacts with ASHH2/SDG8. Binds to MYB56 when dephosphorylated in the nucleus of quiescent center (QC) cells. Binds to WRKY46, WRKY54 and WRKY70 to cooperatively regulate the expression of target genes. In terms of processing, phosphorylated by ASK7/BIN2. Phosphorylation increases protein degradation and/or interferes with the nuclear localization. As to expression, ubiquitously expressed in cotyledons, leaves, hypocotyls and roots.

It localises to the nucleus. Its subcellular location is the cytoplasm. Positive regulator of brassinosteroid (BR) signaling. Transcription factor that activates target gene expression by binding specifically to the DNA sequence 5'-CANNTG-3'(E box) through its N-terminal domain. Can bind individually to the promoter as a homodimer or synergistically as a heterodimer with BIM1, BIM2 or BIM3. The C-terminal domain is probably involved in transcriptional activation. Recruits the transcription elongation factor IWS1 to control BR-regulated gene expression. Forms a trimeric complex with IWS1 and ASHH2/SDG8 to regulate BR-regulated gene expression. Promotes quiescent center (QC) self-renewal by cell divisions in the primary root. Binds to the E-boxes of the BRAVO promoter to repress its expression. The protein is Protein BRASSINAZOLE-RESISTANT 2 of Arabidopsis thaliana (Mouse-ear cress).